We begin with the raw amino-acid sequence, 259 residues long: Ribonuclease HII (259 aa).

Residues 70 to 258 enclose the RNase H type-2 domain; sequence TLIAGIDEVG…VKSLVLGKKE (189 aa). A divalent metal cation is bound by residues aspartate 76, glutamate 77, and aspartate 168.

The protein belongs to the RNase HII family. Mn(2+) serves as cofactor. The cofactor is Mg(2+).

It is found in the cytoplasm. It catalyses the reaction Endonucleolytic cleavage to 5'-phosphomonoester.. Endonuclease that specifically degrades the RNA of RNA-DNA hybrids. The protein is Ribonuclease HII of Streptococcus pneumoniae (strain P1031).